Here is a 191-residue protein sequence, read N- to C-terminus: Peptidyl-tRNA hydrolase (191 aa).

Position 14 (Tyr14) interacts with tRNA. Residue His19 is the Proton acceptor of the active site. 3 residues coordinate tRNA: Phe64, Asn66, and Asn113.

The protein belongs to the PTH family. As to quaternary structure, monomer.

The protein localises to the cytoplasm. It catalyses the reaction an N-acyl-L-alpha-aminoacyl-tRNA + H2O = an N-acyl-L-amino acid + a tRNA + H(+). In terms of biological role, hydrolyzes ribosome-free peptidyl-tRNAs (with 1 or more amino acids incorporated), which drop off the ribosome during protein synthesis, or as a result of ribosome stalling. Functionally, catalyzes the release of premature peptidyl moieties from peptidyl-tRNA molecules trapped in stalled 50S ribosomal subunits, and thus maintains levels of free tRNAs and 50S ribosomes. In Fusobacterium nucleatum subsp. nucleatum (strain ATCC 25586 / DSM 15643 / BCRC 10681 / CIP 101130 / JCM 8532 / KCTC 2640 / LMG 13131 / VPI 4355), this protein is Peptidyl-tRNA hydrolase.